Consider the following 479-residue polypeptide: Ribulose bisphosphate carboxylase large chain (479 aa).

Positions 1-2 (MS) are excised as a propeptide. Positions 123 and 173 each coordinate substrate. Lys175 serves as the catalytic Proton acceptor. A substrate-binding site is contributed by Lys177. Residues Lys201, Asp203, and Glu204 each coordinate Mg(2+). Lys201 bears the N6-carboxylysine mark. Ser208 carries the phosphoserine modification. His294 (proton acceptor) is an active-site residue. Substrate-binding residues include Arg295 and His327. Position 330 is a phosphothreonine (Thr330). Position 379 (Ser379) interacts with substrate.

This sequence belongs to the RuBisCO large chain family. Type I subfamily. In terms of assembly, heterohexadecamer of 8 large chains and 8 small chains; disulfide-linked. The disulfide link is formed within the large subunit homodimers. Mg(2+) serves as cofactor. In terms of processing, the disulfide bond which can form in the large chain dimeric partners within the hexadecamer appears to be associated with oxidative stress and protein turnover.

The protein localises to the plastid. The protein resides in the chloroplast. It carries out the reaction 2 (2R)-3-phosphoglycerate + 2 H(+) = D-ribulose 1,5-bisphosphate + CO2 + H2O. The catalysed reaction is D-ribulose 1,5-bisphosphate + O2 = 2-phosphoglycolate + (2R)-3-phosphoglycerate + 2 H(+). RuBisCO catalyzes two reactions: the carboxylation of D-ribulose 1,5-bisphosphate, the primary event in carbon dioxide fixation, as well as the oxidative fragmentation of the pentose substrate in the photorespiration process. Both reactions occur simultaneously and in competition at the same active site. This chain is Ribulose bisphosphate carboxylase large chain, found in Draba nemorosa (Woodland whitlowgrass).